A 1442-amino-acid chain; its full sequence is Sulfite reductase [NADPH] subunit beta (1442 aa).

A Flavodoxin-like domain is found at 682–831 (LHVYYASDGG…AYSEWEPKLW (150 aa)). Residue S903 is modified to Phosphoserine. [4Fe-4S] cluster contacts are provided by C1300, C1306, C1345, and C1349. C1349 is a binding site for siroheme.

The protein belongs to the nitrite and sulfite reductase 4Fe-4S domain family. In terms of assembly, alpha(2)-beta(2). The alpha component is a flavoprotein, the beta component is a hemoprotein. Siroheme is required as a cofactor. Requires [4Fe-4S] cluster as cofactor.

It localises to the cytoplasm. It catalyses the reaction hydrogen sulfide + 3 NADP(+) + 3 H2O = sulfite + 3 NADPH + 4 H(+). Its pathway is sulfur metabolism; hydrogen sulfide biosynthesis; hydrogen sulfide from sulfite (NADPH route): step 1/1. In terms of biological role, catalyzes the reduction of sulfite to sulfide, one of several activities required for the biosynthesis of L-cysteine from sulfate. The polypeptide is Sulfite reductase [NADPH] subunit beta (MET5) (Saccharomyces cerevisiae (strain ATCC 204508 / S288c) (Baker's yeast)).